Consider the following 1202-residue polypeptide: Metabotropic glycine receptor (1202 aa).

The N-terminal stretch at 1 to 24 (MGAMAYSLLLCLLLAHLGLGEVGA) is a signal peptide. A disordered region spans residues 25-62 (SLDPSERPDSSRERTSRGKQHGQQLPRASAPDPSIPWS). Topologically, residues 25–417 (SLDPSERPDS…CFVQEDKYLR (393 aa)) are extracellular. Positions 28 to 40 (PSERPDSSRERTS) are enriched in basic and acidic residues. Positions 85 to 281 (YLYTGDFHQL…CENGSYKPGW (197 aa)) are cache-like region. N-linked (GlcNAc...) asparagine glycosylation is found at N98 and N143. A disulfide bridge connects residues C99 and C272. Glycine is bound by residues S172 and R173. A glycan (N-linked (GlcNAc...) asparagine) is linked at N215. Residues 234-253 (LHRRGSNQGPRGLGHSWRRR) are disordered. Glycine is bound at residue E271. N274 carries an N-linked (GlcNAc...) asparagine glycan. Residue D307 coordinates glycine. N-linked (GlcNAc...) asparagine glycosylation is present at N333. Residues 418–439 (LAIISFQALCMLLDFVSMLVVY) form a helical membrane-spanning segment. Topologically, residues 440-451 (HFRKAKSIRASG) are cytoplasmic. A helical transmembrane segment spans residues 452–474 (LILLETILFGSLLLYFPVVILYF). Residues 475–478 (EPST) are Extracellular-facing. Residues 479–501 (FRCILLRWVRLLGFATVYGTVTL) form a helical membrane-spanning segment. Cysteines 481 and 573 form a disulfide. Residues 502–525 (KLHRVLKVFLSRTAQRIPYMTGGR) are Cytoplasmic-facing. Residues 526–547 (VMRMLAVIVLVVFWFLVGWTSS) traverse the membrane as a helical segment. The Extracellular segment spans residues 548–576 (MCQNLERDILLVGQGQTSDNLTFNMCLID). A helical membrane pass occupies residues 577–597 (RWDYMTAVAEFLFLLWGIYLC). Residues 598-611 (YAVRTVPSAFHEPR) lie on the Cytoplasmic side of the membrane. A helical transmembrane segment spans residues 612–633 (YMAVAVHNELIITAIFHTIRFV). The Extracellular portion of the chain corresponds to 634-642 (LASRLQPDW). Residues 643-664 (MLMLYFAHTHLTVTVTIGLLLI) form a helical membrane-spanning segment. Over 665–1202 (PKFSHSSNNP…SASKIPGPRK (538 aa)) the chain is Cytoplasmic. Phosphoserine occurs at positions 694, 705, and 708. 2 disordered regions span residues 757–899 (RITE…TSML) and 914–995 (LGLA…QIKD). 2 stretches are compositionally biased toward basic and acidic residues: residues 769-781 (CSKE…DHSA) and 819-828 (STYDHVRDQT). K774 participates in a covalent cross-link: Glycyl lysine isopeptide (Lys-Gly) (interchain with G-Cter in ubiquitin). Residues 845-856 (ENSTLESLSSKK) are compositionally biased toward low complexity. Phosphoserine is present on S865. Basic and acidic residues predominate over residues 925 to 943 (MEDRAKSQKPQPKDRETNR). Polar residues-rich tracts occupy residues 944–958 (KYSN…PNSN) and 975–994 (QRVN…TQIK). Phosphoserine is present on S946. The VCPWE motif 1 motif lies at 1002–1006 (VCPWE). Position 1061 is a phosphoserine (S1061). A VCPWE motif 2 motif is present at residues 1067 to 1071 (VCPWE). Position 1076 is a phosphoserine (S1076). Composition is skewed to polar residues over residues 1132-1144 (QMGD…SSSV) and 1151-1162 (CISSNNSPQPLT). Residues 1132–1162 (QMGDQEKQTSSSVDIIPGSCISSNNSPQPLT) form a disordered region. The VCPWE motif 3 motif lies at 1167–1171 (VCPWE).

It belongs to the G-protein coupled receptor 3 family. As to quaternary structure, homodimer. Associates with the RGS7-GNB5 complex, promoting its localization to the cell membrane and regulating its GTPase activator activity. Interacts (via VCPWE motifs) with GNAO1. Interacts with GPC4. Interacts with EGFLAM.

The protein localises to the cell membrane. It localises to the postsynaptic cell membrane. The protein resides in the presynaptic cell membrane. It is found in the nucleus. Functionally, metabotropic receptor for glycine that controls synapse formation and function in the brain. Acts as an atypical G-protein coupled receptor that recruits and regulates the RGS7-GNB5 complex instead of activating G proteins. In absence of glycine ligand, promotes the GTPase activator activity of RGS7, increasing the GTPase activity of G protein alpha subunits, thereby driving them into their inactive GDP-bound form. Glycine-binding changes the conformation of the intracellular surface, inhibiting the GTPase activator activity of the RGS7-GNB5 complex, promoting G protein alpha subunits into their active GTP-bound form and regulating cAMP levels. Also able to bind taurine, a compound closely related to glycine, but with a two-fold lower affinity. Glycine receptor-dependent regulation of cAMP controls key ion channels, kinases and neurotrophic factors involved in neuronal excitability and synaptic transmission. Plays a pivotal role in regulating mood and cognition via its ability to regulate neuronal excitability in L2/L3 pyramidal neurons of the prefrontal cortex. Also involved in spatial learning by regulating hippocampal CA1 neuronal excitability. Acts as a synaptic organizer in the hippocampus, required for proper mossy fiber-CA3 neurocircuitry establishment, structure and function: induces presynaptic differentiation in contacting axons via its interaction with GPC4. In addition to glycine, may also act as a receptor for osteocalcin (BGLAP) hormone: osteocalcin-binding initiates a signaling response that prevents neuronal apoptosis in the hippocampus and regulates the synthesis of neurotransmitters. The protein is Metabotropic glycine receptor of Rattus norvegicus (Rat).